The chain runs to 268 residues: Putative cysteine-rich repeat secretory protein 5 (268 aa).

A signal peptide spans 1–24 (MTGINTHFAVALFCFFSFSLRAMS). Gnk2-homologous domains are found at residues 27–129 (SQML…NVSF) and 135–248 (DVPS…ISAL).

It belongs to the cysteine-rich repeat secretory protein family.

Its subcellular location is the secreted. The chain is Putative cysteine-rich repeat secretory protein 5 (CRRSP5) from Arabidopsis thaliana (Mouse-ear cress).